Consider the following 256-residue polypeptide: MNNDVFPNKFKAALAAKQVQIGCWSALSNPISTEVLGLAGFDWLVLDGEHAPNDISTFIPQLMALKGSASAPVVRVPTNEPVIIKRLLDIGFYNFLIPFVETKEEAEQAVASTRYPPEGIRGVSVSHRANMFGTVADYFAQSNKNITILVQIESQQGVDNVDAIAATEGVDGIFVGPSDLAAALGHLGNASHPDVQKAIQHIFNRASAHGKPSGILAPVEADARRYLAWGATFVAVGSDLGVFRSATQKLADTFKK.

The active-site Proton acceptor is His-50. Gln-151 provides a ligand contact to substrate. Glu-153 provides a ligand contact to Mg(2+). Substrate contacts are provided by Ser-178 and Asp-179. Position 179 (Asp-179) interacts with Mg(2+).

It belongs to the HpcH/HpaI aldolase family. KDGluc aldolase subfamily. In terms of assembly, homohexamer; trimer of dimers. The cofactor is Mg(2+).

It carries out the reaction 5-dehydro-4-deoxy-D-glucarate = 2-hydroxy-3-oxopropanoate + pyruvate. The enzyme catalyses 2-dehydro-3-deoxy-D-glucarate = 2-hydroxy-3-oxopropanoate + pyruvate. It participates in carbohydrate acid metabolism; galactarate degradation; D-glycerate from galactarate: step 2/3. In terms of biological role, catalyzes the reversible retro-aldol cleavage of both 5-keto-4-deoxy-D-glucarate and 2-keto-3-deoxy-D-glucarate to pyruvate and tartronic semialdehyde. The sequence is that of 5-keto-4-deoxy-D-glucarate aldolase from Shigella dysenteriae serotype 1 (strain Sd197).